We begin with the raw amino-acid sequence, 199 residues long: MNYILIGLISYFCGAIPFSYLLPKLRKIDIRRTGSGNVGGTNALRAAGPVIGFICMVLDGVKAFVPVLVFSLIFKDIHYTGISSIFAVLGHDFPVFLRFKGGKGVASTTGVFFALCPICGFTFLATWISITLLTKYVSLASIVGMYAASFVAFFFNKDYGVLFLLLSTLSTLRHSENIERLVNKSERKTDLIKIIKKRG.

The next 5 helical transmembrane spans lie at 3-23 (YILI…YLLP), 50-70 (VIGF…VLVF), 77-97 (IHYT…PVFL), 110-130 (GVFF…WISI), and 136-156 (YVSL…FFFN).

The protein belongs to the PlsY family. In terms of assembly, probably interacts with PlsX.

The protein localises to the cell inner membrane. The enzyme catalyses an acyl phosphate + sn-glycerol 3-phosphate = a 1-acyl-sn-glycero-3-phosphate + phosphate. Its pathway is lipid metabolism; phospholipid metabolism. Its function is as follows. Catalyzes the transfer of an acyl group from acyl-phosphate (acyl-PO(4)) to glycerol-3-phosphate (G3P) to form lysophosphatidic acid (LPA). This enzyme utilizes acyl-phosphate as fatty acyl donor, but not acyl-CoA or acyl-ACP. This chain is Glycerol-3-phosphate acyltransferase, found in Pseudothermotoga lettingae (strain ATCC BAA-301 / DSM 14385 / NBRC 107922 / TMO) (Thermotoga lettingae).